The sequence spans 125 residues: Small ribosomal subunit protein eS8 (125 aa).

The interval 1 to 36 (MKDQGRSTRKRTGGRLHDVSKKKRHQLGREPAETTV) is disordered. A compositionally biased stretch (basic residues) spans 7–26 (STRKRTGGRLHDVSKKKRHQ). Positions 27–36 (LGREPAETTV) are enriched in basic and acidic residues.

This sequence belongs to the eukaryotic ribosomal protein eS8 family. As to quaternary structure, part of the 30S ribosomal subunit.

The polypeptide is Small ribosomal subunit protein eS8 (Haloquadratum walsbyi (strain DSM 16790 / HBSQ001)).